The following is a 131-amino-acid chain: Small ribosomal subunit protein uS8 (131 aa).

Belongs to the universal ribosomal protein uS8 family. As to quaternary structure, part of the 30S ribosomal subunit. Contacts proteins S5 and S12.

In terms of biological role, one of the primary rRNA binding proteins, it binds directly to 16S rRNA central domain where it helps coordinate assembly of the platform of the 30S subunit. This is Small ribosomal subunit protein uS8 from Thiobacillus denitrificans (strain ATCC 25259 / T1).